Here is a 349-residue protein sequence, read N- to C-terminus: MEYNNNNQQSFWQFSDQLRVQTPNLANLSLNDSIWSTNSVFKERRNLDIAATTDKNNNQIDYYQKKTTSDNINSNWNWKSSGSNNDMGLGFGPVGSKSTVDLNPIDKFNSPFNDTWKFNSVNVNVNGYSPSSAVNGDFNKGVYTSMKKYGYNVNLKNNNKNKGIDEDHQIQKGGKKNRKNQQNNNNQRNEDDKNNGLDKRFKTLPPAEALPRNETIGGYIFVCNNDTMEENLKRQLFGLPPRYRDSVRAITPGLPLFLYNYSTHQLHGIYEAASFGGTNIELNAFEDKKCPGESRFPAQVRAITRKVCLPLEEDSFRPILHHYDGPKFRLELSVPEVLSLLDIFADQNP.

Positions 157-201 are disordered; that stretch reads NNNKNKGIDEDHQIQKGGKKNRKNQQNNNNQRNEDDKNNGLDKRF. The segment covering 188-201 has biased composition (basic and acidic residues); the sequence is RNEDDKNNGLDKRF. In terms of domain architecture, DCD spans 214–346; sequence ETIGGYIFVC…VLSLLDIFAD (133 aa).

In terms of assembly, interacts with CRY2 in the cytoplasm. Interacts with Verticillium dahliae PevD1. Interacts with FYPP3. As to expression, highly expressed in sensecent leaves, cauline leaves and sepals. Expressed in the shoot apical meristem, leaf veins, central cylinder, root hair zone, root tips, rosette leaves, flowers and siliques.

The protein localises to the cytoplasm. Its function is as follows. Contributes to the initial phase of responses to abiotic and biotic stress signals. Binds FYPP3 and facilitates FYPP3 degradation to promote abscisic acid (ABA) response. This Arabidopsis thaliana (Mouse-ear cress) protein is DCD domain-containing protein NRP.